We begin with the raw amino-acid sequence, 350 residues long: tRNA uridine(34) hydroxylase (350 aa).

Positions 146–240 (DDPDAIFIDM…YARRAREQGL (95 aa)) constitute a Rhodanese domain. The active-site Cysteine persulfide intermediate is the Cys200. The segment at 318–350 (QRRRRAGREKGNKIFNKSRGRLNSKLGIPDPTE) is disordered.

The protein belongs to the TrhO family.

It carries out the reaction uridine(34) in tRNA + AH2 + O2 = 5-hydroxyuridine(34) in tRNA + A + H2O. Catalyzes oxygen-dependent 5-hydroxyuridine (ho5U) modification at position 34 in tRNAs. This Salmonella arizonae (strain ATCC BAA-731 / CDC346-86 / RSK2980) protein is tRNA uridine(34) hydroxylase.